Consider the following 375-residue polypeptide: Chaperone protein DnaJ (375 aa).

The 66-residue stretch at D6–G71 folds into the J domain. The CR-type zinc finger occupies G132–Q214. Zn(2+) contacts are provided by C145, C148, C162, C165, C188, C191, C202, and C205. 4 CXXCXGXG motif repeats span residues C145–G152, C162–G169, C188–G195, and C202–G209. The segment at P222–G243 is disordered.

This sequence belongs to the DnaJ family. As to quaternary structure, homodimer. Zn(2+) is required as a cofactor.

It is found in the cytoplasm. Its function is as follows. Participates actively in the response to hyperosmotic and heat shock by preventing the aggregation of stress-denatured proteins and by disaggregating proteins, also in an autonomous, DnaK-independent fashion. Unfolded proteins bind initially to DnaJ; upon interaction with the DnaJ-bound protein, DnaK hydrolyzes its bound ATP, resulting in the formation of a stable complex. GrpE releases ADP from DnaK; ATP binding to DnaK triggers the release of the substrate protein, thus completing the reaction cycle. Several rounds of ATP-dependent interactions between DnaJ, DnaK and GrpE are required for fully efficient folding. Also involved, together with DnaK and GrpE, in the DNA replication of plasmids through activation of initiation proteins. This chain is Chaperone protein DnaJ, found in Halothermothrix orenii (strain H 168 / OCM 544 / DSM 9562).